Reading from the N-terminus, the 461-residue chain is Mycosin-3 (461 aa).

The signal sequence occupies residues 1–25; sequence MIRAAFACLAATVVVAGWWTPPAWA. Residues 64–397 enclose the Peptidase S8 domain; sequence DPGVPTPSQT…AGNLDAVAAL (334 aa). Catalysis depends on charge relay system residues Asp95, His126, and Ser342. Residues 432–452 form a helical membrane-spanning segment; it reads AFAGAAALSVLVGLTAATVAI.

This sequence belongs to the peptidase S8 family.

It is found in the cell membrane. This chain is Mycosin-3, found in Mycobacterium tuberculosis (strain ATCC 25618 / H37Rv).